Here is a 217-residue protein sequence, read N- to C-terminus: MDYSIARRLMVEQQVIRRGVSDPLVVDAMMRVPRHLFVEEALWSQAYSDFPLPIGEKQTISQPFMVAFMTESLCLHGGEKVLEIGTGSGYQAAVLSQIVSRVYTVERLPGLARRARRILDSVGCRNVNIKLTDGTFGWEEESPFDGIVVTAGSPQIPHHYLEQLAVGGRLVIPVGNRGSQVLKRVVRTGVEKFSEEDLLDCRFVPLVGKYGWHEEGD.

Residue S61 is part of the active site.

It belongs to the methyltransferase superfamily. L-isoaspartyl/D-aspartyl protein methyltransferase family.

It is found in the cytoplasm. The catalysed reaction is [protein]-L-isoaspartate + S-adenosyl-L-methionine = [protein]-L-isoaspartate alpha-methyl ester + S-adenosyl-L-homocysteine. In terms of biological role, catalyzes the methyl esterification of L-isoaspartyl residues in peptides and proteins that result from spontaneous decomposition of normal L-aspartyl and L-asparaginyl residues. It plays a role in the repair and/or degradation of damaged proteins. The chain is Protein-L-isoaspartate O-methyltransferase from Syntrophotalea carbinolica (strain DSM 2380 / NBRC 103641 / GraBd1) (Pelobacter carbinolicus).